The chain runs to 311 residues: Tryptophan 2,3-dioxygenase (311 aa).

The interval 1-37 is disordered; the sequence is MQPPGGDAPAGCPFSGARAAQPAQAAHEAPHVPGEAD. Residues 17-27 are compositionally biased toward low complexity; that stretch reads ARAAQPAQAAH. Substrate contacts are provided by residues 80–84, tyrosine 142, and arginine 146; that span reads FIIQH. Heme is bound at residue histidine 269. Substrate is bound at residue threonine 283.

This sequence belongs to the tryptophan 2,3-dioxygenase family. As to quaternary structure, homotetramer. The cofactor is heme.

The enzyme catalyses L-tryptophan + O2 = N-formyl-L-kynurenine. Its pathway is amino-acid degradation; L-tryptophan degradation via kynurenine pathway; L-kynurenine from L-tryptophan: step 1/2. Functionally, heme-dependent dioxygenase that catalyzes the oxidative cleavage of the L-tryptophan (L-Trp) pyrrole ring and converts L-tryptophan to N-formyl-L-kynurenine. Catalyzes the oxidative cleavage of the indole moiety. The polypeptide is Tryptophan 2,3-dioxygenase (Burkholderia cenocepacia (strain ATCC BAA-245 / DSM 16553 / LMG 16656 / NCTC 13227 / J2315 / CF5610) (Burkholderia cepacia (strain J2315))).